Here is a 134-residue protein sequence, read N- to C-terminus: Small ribosomal subunit protein bS6 (134 aa).

Residues 100-134 (SFLARDETDRRERSEETAEGEGEPDHSANEAVVTA) form a disordered region. A compositionally biased stretch (basic and acidic residues) spans 103-115 (ARDETDRRERSEE).

This sequence belongs to the bacterial ribosomal protein bS6 family.

Its function is as follows. Binds together with bS18 to 16S ribosomal RNA. The protein is Small ribosomal subunit protein bS6 of Acidithiobacillus ferrooxidans (strain ATCC 23270 / DSM 14882 / CIP 104768 / NCIMB 8455) (Ferrobacillus ferrooxidans (strain ATCC 23270)).